Here is a 558-residue protein sequence, read N- to C-terminus: Membrane protein insertase YidC (558 aa).

5 consecutive transmembrane segments (helical) span residues 3 to 23, 364 to 384, 438 to 458, 477 to 497, and 508 to 528; these read IKRT…FDNW, FVGN…AVFF, LPVV…LASV, PYFI…KLNP, and MMFM…GLVL.

The protein belongs to the OXA1/ALB3/YidC family. Type 1 subfamily. Interacts with the Sec translocase complex via SecD. Specifically interacts with transmembrane segments of nascent integral membrane proteins during membrane integration.

It is found in the cell inner membrane. In terms of biological role, required for the insertion and/or proper folding and/or complex formation of integral membrane proteins into the membrane. Involved in integration of membrane proteins that insert both dependently and independently of the Sec translocase complex, as well as at least some lipoproteins. Aids folding of multispanning membrane proteins. The sequence is that of Membrane protein insertase YidC from Burkholderia pseudomallei (strain 668).